Reading from the N-terminus, the 272-residue chain is MRLNNLQLKNNLNLSNKLDKERIPEHIAIIMDGNGRWATKKGLPRSFGHNKGVSVLKEIIKASKNIDCKVLTVYAFSTENWIRPSNEVDFLINLFEKVLKKEISEIHQESIKIKFIGDLSPLPNSLKLLIKSSEALTNNNKKFTLNICVNYGGRQEIVKAAKEIAIKSSSGKIKPSDIDEQLFNSELLTKGSMDPELLIRTSGEKRISNFLLWQLAYSEIYVTDVLWPDFTESEFLKAIIDYQSRNRRFGGIESLSNESFEDSCYSSLSKND.

Asp32 is a catalytic residue. Asp32 is a binding site for Mg(2+). Substrate is bound by residues 33-36 (GNGR), Trp37, Arg45, His49, and 77-79 (STE). Residue Asn80 is the Proton acceptor of the active site. Substrate-binding positions include Trp81, Arg83, Arg200, and 206-208 (RIS). Residue Glu219 participates in Mg(2+) binding.

Belongs to the UPP synthase family. Homodimer. Requires Mg(2+) as cofactor.

In terms of biological role, catalyzes the condensation of isopentenyl diphosphate (IPP) with allylic pyrophosphates generating different type of terpenoids. This Prochlorococcus marinus subsp. pastoris (strain CCMP1986 / NIES-2087 / MED4) protein is Isoprenyl transferase.